The sequence spans 225 residues: Deoxyribose-phosphate aldolase (225 aa).

Asp-96 (proton donor/acceptor) is an active-site residue. The active-site Schiff-base intermediate with acetaldehyde is Lys-157. The active-site Proton donor/acceptor is the Lys-185.

The protein belongs to the DeoC/FbaB aldolase family. DeoC type 1 subfamily.

Its subcellular location is the cytoplasm. It catalyses the reaction 2-deoxy-D-ribose 5-phosphate = D-glyceraldehyde 3-phosphate + acetaldehyde. Its pathway is carbohydrate degradation; 2-deoxy-D-ribose 1-phosphate degradation; D-glyceraldehyde 3-phosphate and acetaldehyde from 2-deoxy-alpha-D-ribose 1-phosphate: step 2/2. Catalyzes a reversible aldol reaction between acetaldehyde and D-glyceraldehyde 3-phosphate to generate 2-deoxy-D-ribose 5-phosphate. The chain is Deoxyribose-phosphate aldolase from Microcystis aeruginosa (strain NIES-843 / IAM M-2473).